We begin with the raw amino-acid sequence, 97 residues long: Protein RnfH (97 aa).

This sequence belongs to the UPF0125 (RnfH) family.

The protein is Protein RnfH of Halorhodospira halophila (strain DSM 244 / SL1) (Ectothiorhodospira halophila (strain DSM 244 / SL1)).